A 367-amino-acid chain; its full sequence is Pectate lyase 1 (367 aa).

The N-terminal stretch at 1 to 21 (MASPCLVAVLVFLCAIVSCYS) is a signal peptide. 2 cysteine pairs are disulfide-bonded: cysteine 28–cysteine 45 and cysteine 128–cysteine 147. A glycan (N-linked (GlcNAc...) asparagine) is linked at asparagine 148. Aspartate 170 serves as a coordination point for Ca(2+). N-linked (GlcNAc...) asparagine glycosylation is present at asparagine 178. Residues aspartate 194 and aspartate 198 each coordinate Ca(2+). Arginine 250 is an active-site residue. A glycan (N-linked (GlcNAc...) asparagine) is linked at asparagine 293. A disulfide bridge connects residues cysteine 306 and cysteine 312.

The protein belongs to the polysaccharide lyase 1 family. Amb a subfamily. The cofactor is Ca(2+).

It carries out the reaction Eliminative cleavage of (1-&gt;4)-alpha-D-galacturonan to give oligosaccharides with 4-deoxy-alpha-D-galact-4-enuronosyl groups at their non-reducing ends.. Its pathway is glycan metabolism; pectin degradation; 2-dehydro-3-deoxy-D-gluconate from pectin: step 2/5. Functionally, has pectate lyase activity. The protein is Pectate lyase 1 of Hesperocyparis arizonica (Arizona cypress).